A 139-amino-acid chain; its full sequence is D-ribose pyranase (139 aa).

The active-site Proton donor is His-20. Residues Asp-28, His-106, and 128–130 (YAN) contribute to the substrate site.

The protein belongs to the RbsD / FucU family. RbsD subfamily. In terms of assembly, homodecamer.

It is found in the cytoplasm. It catalyses the reaction beta-D-ribopyranose = beta-D-ribofuranose. It functions in the pathway carbohydrate metabolism; D-ribose degradation; D-ribose 5-phosphate from beta-D-ribopyranose: step 1/2. Catalyzes the interconversion of beta-pyran and beta-furan forms of D-ribose. The sequence is that of D-ribose pyranase from Edwardsiella ictaluri (strain 93-146).